Consider the following 104-residue polypeptide: Late embryogenis abundant protein 41 (104 aa).

A mitochondrion-targeting transit peptide spans 1-31 (MAARSLSGAVKSLCSAASGSLSCSIVLRRSY).

This sequence belongs to the LEA type 3 family.

It is found in the mitochondrion. In Arabidopsis thaliana (Mouse-ear cress), this protein is Late embryogenis abundant protein 41.